Here is a 202-residue protein sequence, read N- to C-terminus: Small ribosomal subunit protein uS4c (202 aa).

In terms of domain architecture, S4 RNA-binding spans 90–148; sequence MRLDNVIFRLGMSSTIPGARQLVNHRHIMINDEMVDTPGYNCKPRDIITLKNISESRSG.

The protein belongs to the universal ribosomal protein uS4 family. As to quaternary structure, part of the 30S ribosomal subunit. Contacts protein S5. The interaction surface between S4 and S5 is involved in control of translational fidelity.

It localises to the plastid. The protein resides in the chloroplast. Functionally, one of the primary rRNA binding proteins, it binds directly to 16S rRNA where it nucleates assembly of the body of the 30S subunit. In terms of biological role, with S5 and S12 plays an important role in translational accuracy. This chain is Small ribosomal subunit protein uS4c (rps4), found in Haplomitrium hookeri (Hooker's flapwort).